The following is a 173-amino-acid chain: Photosystem I assembly protein Ycf3 (173 aa).

TPR repeat units lie at residues 36–69, 73–106, and 121–154; these read AFAY…EQDD, SYIL…NPRL, and GEQS…APNN.

The protein belongs to the Ycf3 family.

The protein resides in the cellular thylakoid membrane. Functionally, essential for the assembly of the photosystem I (PSI) complex. May act as a chaperone-like factor to guide the assembly of the PSI subunits. The sequence is that of Photosystem I assembly protein Ycf3 from Synechococcus sp. (strain JA-3-3Ab) (Cyanobacteria bacterium Yellowstone A-Prime).